Consider the following 367-residue polypeptide: tRNA-specific 2-thiouridylase MnmA (367 aa).

Residues 24-31 (AMSGGVDS) and Leu-50 each bind ATP. Cys-115 serves as the catalytic Nucleophile. A disulfide bridge links Cys-115 with Cys-211. Gly-139 contributes to the ATP binding site. The tract at residues 161–163 (KDQ) is interaction with tRNA. Catalysis depends on Cys-211, which acts as the Cysteine persulfide intermediate.

This sequence belongs to the MnmA/TRMU family.

The protein localises to the cytoplasm. The enzyme catalyses S-sulfanyl-L-cysteinyl-[protein] + uridine(34) in tRNA + AH2 + ATP = 2-thiouridine(34) in tRNA + L-cysteinyl-[protein] + A + AMP + diphosphate + H(+). Its function is as follows. Catalyzes the 2-thiolation of uridine at the wobble position (U34) of tRNA, leading to the formation of s(2)U34. This chain is tRNA-specific 2-thiouridylase MnmA, found in Ehrlichia canis (strain Jake).